The sequence spans 236 residues: Translocon-associated protein subunit alpha (236 aa).

A signal peptide spans Met1–Ser20. Topologically, residues Asp21–Asp163 are lumenal. N-linked (GlcNAc...) asparagine glycans are attached at residues Asn74, Asn94, Asn141, Asn148, and Asn152. A helical transmembrane segment spans residues Ser164–Gly184. Residues Lys185–Lys236 lie on the Cytoplasmic side of the membrane.

Belongs to the TRAP-alpha family. As to quaternary structure, heterotrimer of TRAP-alpha, TRAP-beta and TRAP-gamma. In terms of processing, phosphorylated in its cytoplasmic tail.

Its subcellular location is the endoplasmic reticulum membrane. Its function is as follows. TRAP proteins are part of a complex whose function is to bind calcium to the ER membrane and thereby regulate the retention of ER resident proteins. In Dictyostelium discoideum (Social amoeba), this protein is Translocon-associated protein subunit alpha (ssr1).